The chain runs to 620 residues: 1-deoxy-D-xylulose-5-phosphate synthase (620 aa).

Residues histidine 80 and 121–123 contribute to the thiamine diphosphate site; that span reads GHS. Position 152 (aspartate 152) interacts with Mg(2+). Thiamine diphosphate-binding positions include 153 to 154, asparagine 181, tyrosine 288, and glutamate 370; that span reads GA. Position 181 (asparagine 181) interacts with Mg(2+).

Belongs to the transketolase family. DXPS subfamily. Homodimer. The cofactor is Mg(2+). Thiamine diphosphate serves as cofactor.

It catalyses the reaction D-glyceraldehyde 3-phosphate + pyruvate + H(+) = 1-deoxy-D-xylulose 5-phosphate + CO2. Its pathway is metabolic intermediate biosynthesis; 1-deoxy-D-xylulose 5-phosphate biosynthesis; 1-deoxy-D-xylulose 5-phosphate from D-glyceraldehyde 3-phosphate and pyruvate: step 1/1. Its function is as follows. Catalyzes the acyloin condensation reaction between C atoms 2 and 3 of pyruvate and glyceraldehyde 3-phosphate to yield 1-deoxy-D-xylulose-5-phosphate (DXP). The chain is 1-deoxy-D-xylulose-5-phosphate synthase from Klebsiella pneumoniae subsp. pneumoniae (strain ATCC 700721 / MGH 78578).